The following is a 596-amino-acid chain: Nucleotidyltransferase lcsQ (596 aa).

Residues 1-22 (MLLRLSPSRMALKRKLDSFLRN) constitute a mitochondrion transit peptide. Positions 475–504 (IVAHPGKPSQPADVPETPLSSGASKSKNLD) are disordered.

This sequence belongs to the tRNA nucleotidyltransferase/poly(A) polymerase family.

Its subcellular location is the mitochondrion. In terms of biological role, nucleotidyltransferase; part of the gene cluster that mediates the biosynthesis of the lipopeptide antibiotics leucinostatins that show extensive biological activities, including antimalarial, antiviral, antibacterial, antifungal, and antitumor activities, as well as phytotoxic. The function of lcsQ within the leucinostatins biosynthesis has not been identified yet. This Purpureocillium lilacinum (Paecilomyces lilacinus) protein is Nucleotidyltransferase lcsQ.